The following is a 426-amino-acid chain: Adenylosuccinate synthetase (426 aa).

GTP contacts are provided by residues Gly-14–Lys-20 and Gly-42–Thr-44. Asp-15 acts as the Proton acceptor in catalysis. Mg(2+) contacts are provided by Asp-15 and Gly-42. Residues Asp-15 to Lys-18, Asn-40 to His-43, Thr-130, Arg-144, Gln-224, Thr-239, and Arg-303 contribute to the IMP site. His-43 serves as the catalytic Proton donor. Thr-299–Arg-305 contributes to the substrate binding site. GTP is bound by residues Arg-305, Leu-331–Asp-333, and Ser-413–Gly-415.

This sequence belongs to the adenylosuccinate synthetase family. As to quaternary structure, homodimer. It depends on Mg(2+) as a cofactor.

It localises to the cytoplasm. It catalyses the reaction IMP + L-aspartate + GTP = N(6)-(1,2-dicarboxyethyl)-AMP + GDP + phosphate + 2 H(+). It participates in purine metabolism; AMP biosynthesis via de novo pathway; AMP from IMP: step 1/2. In terms of biological role, plays an important role in the de novo pathway of purine nucleotide biosynthesis. Catalyzes the first committed step in the biosynthesis of AMP from IMP. The chain is Adenylosuccinate synthetase from Malacoplasma penetrans (strain HF-2) (Mycoplasma penetrans).